A 198-amino-acid polypeptide reads, in one-letter code: Outer-membrane lipoprotein carrier protein (198 aa).

An N-terminal signal peptide occupies residues 1 to 17; the sequence is MKKILLSLCFLSSVAFA.

Belongs to the LolA family. As to quaternary structure, monomer.

The protein resides in the periplasm. Its function is as follows. Participates in the translocation of lipoproteins from the inner membrane to the outer membrane. Only forms a complex with a lipoprotein if the residue after the N-terminal Cys is not an aspartate (The Asp acts as a targeting signal to indicate that the lipoprotein should stay in the inner membrane). This chain is Outer-membrane lipoprotein carrier protein, found in Aliivibrio salmonicida (strain LFI1238) (Vibrio salmonicida (strain LFI1238)).